Here is a 247-residue protein sequence, read N- to C-terminus: ABC-type transporter ATP-binding protein EcsA (247 aa).

The ABC transporter domain occupies 4–234; sequence LSVKDLTGGY…FGMKDAALDD (231 aa). Position 36–43 (36–43) interacts with ATP; sequence GLNGAGKS.

It belongs to the ABC transporter superfamily.

In terms of biological role, has a role in exoprotein production, sporulation and competence. The chain is ABC-type transporter ATP-binding protein EcsA (ecsA) from Bacillus subtilis (strain 168).